The primary structure comprises 123 residues: S-adenosylmethionine decarboxylase proenzyme 2 (123 aa).

The active-site Schiff-base intermediate with substrate; via pyruvic acid is the Ser-65. Ser-65 bears the Pyruvic acid (Ser); by autocatalysis mark. The active-site Proton acceptor; for processing activity is His-70. The active-site Proton donor; for catalytic activity is Cys-85.

It belongs to the prokaryotic AdoMetDC family. Type 1 subfamily. In terms of assembly, heterotetramer of two alpha and two beta chains arranged as a dimer of alpha/beta heterodimers. Requires pyruvate as cofactor. In terms of processing, is synthesized initially as an inactive proenzyme. Formation of the active enzyme involves a self-maturation process in which the active site pyruvoyl group is generated from an internal serine residue via an autocatalytic post-translational modification. Two non-identical subunits are generated from the proenzyme in this reaction, and the pyruvate is formed at the N-terminus of the alpha chain, which is derived from the carboxyl end of the proenzyme. The post-translation cleavage follows an unusual pathway, termed non-hydrolytic serinolysis, in which the side chain hydroxyl group of the serine supplies its oxygen atom to form the C-terminus of the beta chain, while the remainder of the serine residue undergoes an oxidative deamination to produce ammonia and the pyruvoyl group blocking the N-terminus of the alpha chain.

The enzyme catalyses S-adenosyl-L-methionine + H(+) = S-adenosyl 3-(methylsulfanyl)propylamine + CO2. The protein operates within amine and polyamine biosynthesis; S-adenosylmethioninamine biosynthesis; S-adenosylmethioninamine from S-adenosyl-L-methionine: step 1/1. Its function is as follows. Catalyzes the decarboxylation of S-adenosylmethionine to S-adenosylmethioninamine (dcAdoMet), the propylamine donor required for the synthesis of the polyamines spermine and spermidine from the diamine putrescine. This Bacillus cereus (strain ATCC 14579 / DSM 31 / CCUG 7414 / JCM 2152 / NBRC 15305 / NCIMB 9373 / NCTC 2599 / NRRL B-3711) protein is S-adenosylmethionine decarboxylase proenzyme 2.